We begin with the raw amino-acid sequence, 423 residues long: Structure-specific endonuclease subunit SLX1 (423 aa).

Residues 23-105 (AFYCCYLLRS…QNTKVSRHAD (83 aa)) form the GIY-YIG domain. 2 disordered regions span residues 300–334 (RRRR…DALQ) and 365–406 (AHRP…LGLQ).

It belongs to the SLX1 family. Forms a heterodimer with SLX4. It depends on a divalent metal cation as a cofactor.

It is found in the nucleus. Its function is as follows. Catalytic subunit of the SLX1-SLX4 structure-specific endonuclease that resolves DNA secondary structures generated during DNA repair and recombination. Has endonuclease activity towards branched DNA substrates, introducing single-strand cuts in duplex DNA close to junctions with ss-DNA. The polypeptide is Structure-specific endonuclease subunit SLX1 (Paracoccidioides brasiliensis (strain Pb03)).